A 55-amino-acid chain; its full sequence is MFNIYLENAFYLNGITFAKLPEAYSIFDPIVDVMPIIPLFFFLLAFVWQASVSFR.

Residues 1 to 18 (MFNIYLENAFYLNGITFA) constitute a propeptide that is removed on maturation. A helical membrane pass occupies residues 26–46 (IFDPIVDVMPIIPLFFFLLAF).

This sequence belongs to the PsbK family. In terms of assembly, PSII is composed of 1 copy each of membrane proteins PsbA, PsbB, PsbC, PsbD, PsbE, PsbF, PsbH, PsbI, PsbJ, PsbK, PsbL, PsbM, PsbT, PsbX, PsbY, PsbZ, Psb30/Ycf12, at least 3 peripheral proteins of the oxygen-evolving complex and a large number of cofactors. It forms dimeric complexes.

It localises to the plastid. The protein localises to the chloroplast thylakoid membrane. Functionally, one of the components of the core complex of photosystem II (PSII). PSII is a light-driven water:plastoquinone oxidoreductase that uses light energy to abstract electrons from H(2)O, generating O(2) and a proton gradient subsequently used for ATP formation. It consists of a core antenna complex that captures photons, and an electron transfer chain that converts photonic excitation into a charge separation. In Marchantia polymorpha (Common liverwort), this protein is Photosystem II reaction center protein K.